Consider the following 559-residue polypeptide: Subtelomeric hrmA-associated cluster protein AFUB_079030 (559 aa).

Disordered stretches follow at residues 163–190 (AKHPYNGGKPPAGAPPGKKGDPEKTKPE), 298–351 (RESN…TGMA), 427–451 (SITSSSPEQTSHHRQAPLPMQHSAS), and 525–559 (FRTGFLSHPCDPSQQAPHSSGCGHPDSWTQNRPHV). Low complexity predominate over residues 169–179 (GGKPPAGAPPG). Composition is skewed to basic and acidic residues over residues 180–189 (KKGDPEKTKP) and 300–325 (SNQKEKDGDSNVDPDQKHEQEDDNAR). Over residues 336-346 (NSTSPMSNSAE) the composition is skewed to polar residues.

Part of the subtelomeric hrmA-associated cluster (HAC) containing genes that alter the hyphal surface (such as reduced total chitin or increased beta-glucan exposure) and perturb inter-hyphal interactions within the developing biofilms, resulting in a loss of vertically aligned polarized growing filaments. Consequently, this hypoxia-typic morphotype (called H-MORPH) with altered biofilm architecture leads to increased hypoxia fitness, increased host inflammation, rapid disease progression, and mortality in a murine model of invasive aspergillosis. This chain is Subtelomeric hrmA-associated cluster protein AFUB_079030, found in Aspergillus fumigatus (strain CBS 144.89 / FGSC A1163 / CEA10) (Neosartorya fumigata).